The following is a 151-amino-acid chain: RNA polymerase-binding transcription factor DksA (151 aa).

Residues C114, C117, C135, and C138 each contribute to the Zn(2+) site. Residues 114 to 138 (CNSCSVEIGIRRLEARPTADLCIDC) form a dksA C4-type zinc finger.

Belongs to the DksA family. Interacts directly with the RNA polymerase.

The protein resides in the cytoplasm. In terms of biological role, transcription factor that acts by binding directly to the RNA polymerase (RNAP). Required for negative regulation of rRNA expression and positive regulation of several amino acid biosynthesis promoters. Also required for regulation of fis expression. In Buchnera aphidicola subsp. Acyrthosiphon pisum (strain APS) (Acyrthosiphon pisum symbiotic bacterium), this protein is RNA polymerase-binding transcription factor DksA.